Here is a 1255-residue protein sequence, read N- to C-terminus: ATP-binding cassette sub-family B member 5 (1255 aa).

The chain crosses the membrane as a helical span at residues 46 to 66 (IVLMTLGILASMINGATVPLM). The 301-residue stretch at 51–351 (LGILASMING…SVAPHLETFT (301 aa)) folds into the ABC transmembrane type-1 1 domain. N-linked (GlcNAc...) asparagine glycosylation is found at Asn86 and Asn92. Residues 104–124 (IIVLTLYYIGIGAAALIFGYV) traverse the membrane as a helical segment. N-linked (GlcNAc...) asparagine glycosylation is present at Asn189. The next 2 helical transmembrane spans lie at 290–310 (LSLG…FWYG) and 314–334 (IFGG…FSVI). N-linked (GlcNAc...) asparagine glycosylation is found at Asn372 and Asn391. In terms of domain architecture, ABC transporter 1 spans 387–623 (IEFKNVSFSY…QGLYYSLAMA (237 aa)). 422–429 (GPSGSGKS) contributes to the ATP binding site. Asn643 is a glycosylation site (N-linked (GlcNAc...) asparagine). The next 2 membrane-spanning stretches (helical) occupy residues 694 to 714 (VLGT…SIIF) and 738 to 758 (MMLV…GLFY). An ABC transmembrane type-1 2 domain is found at 694–981 (VLGTLASALN…TLVWAPEYSK (288 aa)). Asn790 carries an N-linked (GlcNAc...) asparagine glycan. Transmembrane regions (helical) follow at residues 814-836 (LGIV…IYGW), 841-863 (LILS…MAGF), and 955-975 (MFIV…TLVW). The ABC transporter 2 domain occupies 1016–1254 (LEFREVSFVY…GDTYFKLVAA (239 aa)). A glycan (N-linked (GlcNAc...) asparagine) is linked at Asn1036. 1051–1058 (GSSGCGKS) is an ATP binding site. Asn1105, Asn1189, and Asn1229 each carry an N-linked (GlcNAc...) asparagine glycan.

Belongs to the ABC transporter superfamily. ABCB family. Multidrug resistance exporter (TC 3.A.1.201) subfamily. As to expression, in developing eye, expressed in basal limbal epithelium but not in central cornea. Acts as a marker of limbal stem cells.

Its subcellular location is the cell membrane. The catalysed reaction is daunorubicin(in) + ATP + H2O = daunorubicin(out) + ADP + phosphate + H(+). Its function is as follows. Energy-dependent efflux transporter responsible for decreased drug accumulation in multidrug-resistant cells. Specifically present in limbal stem cells, where it plays a key role in corneal development and repair. The protein is ATP-binding cassette sub-family B member 5 of Mus musculus (Mouse).